A 174-amino-acid polypeptide reads, in one-letter code: Guided entry of tail-anchored proteins factor 1 (174 aa).

Topologically, residues 1–8 (MSAAEADR) are lumenal. The helical transmembrane segment at 9-29 (WAWLLVLSFVFGCNVLRILLP) threads the bilayer. Residues 30–99 (SFSFFMSRVL…VKARTAQLAK (70 aa)) are Cytoplasmic-facing. Positions 39-94 (LQKDAEQESQMRAEIQGMKQELSTVNMMDEFARYARLERKINKMTDKLKTHVKART) form a coiled coil. The segment at 39-97 (LQKDAEQESQMRAEIQGMKQELSTVNMMDEFARYARLERKINKMTDKLKTHVKARTAQL) is interaction with GET3/TRC40. Residues 100–120 (IKWVISVAFYILQAALMVSLI) traverse the membrane as a helical segment. Over 121-148 (WKYYSVPVAVVPSKWITPLDRLVAFPTR) the chain is Lumenal. The chain crosses the membrane as a helical span at residues 149-169 (VAGGVGITCWILVCNKVVAIV). Over 170-174 (LHPFS) the chain is Cytoplasmic.

This sequence belongs to the WRB/GET1 family. As to quaternary structure, component of the Golgi to ER traffic (GET) complex, which is composed of GET1/WRB, CAMLG/GET2 and GET3. Within the complex, GET1 and CAMLG form a heterotetramer which is stabilized by phosphatidylinositol binding and which binds to the GET3 homodimer. Interacts with CAMLG (via C-terminus). GET3 shows a higher affinity for CAMLG than for GET1.

The protein resides in the endoplasmic reticulum membrane. Required for the post-translational delivery of tail-anchored (TA) proteins to the endoplasmic reticulum. Together with CAMLG/GET2, acts as a membrane receptor for soluble GET3/TRC40, which recognizes and selectively binds the transmembrane domain of TA proteins in the cytosol. Required to ensure correct topology and ER insertion of CAMLG. The chain is Guided entry of tail-anchored proteins factor 1 from Bos taurus (Bovine).